The chain runs to 141 residues: Hemoglobin subunit alpha (141 aa).

A Globin domain is found at 1–141 (VLSPGDKSNI…VSTVLTSKYR (141 aa)). Serine 3 carries the phosphoserine modification. Residues lysine 7 and lysine 11 each carry the N6-succinyllysine modification. Lysine 16 is modified (N6-acetyllysine; alternate). Lysine 16 is subject to N6-succinyllysine; alternate. The residue at position 24 (tyrosine 24) is a Phosphotyrosine. Serine 35 is modified (phosphoserine). Lysine 40 carries the post-translational modification N6-succinyllysine. Phosphoserine is present on serine 49. Histidine 58 contributes to the O2 binding site. A heme b-binding site is contributed by histidine 87. At serine 102 the chain carries Phosphoserine. A Phosphothreonine modification is found at threonine 108. Serine 124 carries the phosphoserine modification. Phosphothreonine occurs at positions 134 and 137. Serine 138 is modified (phosphoserine).

This sequence belongs to the globin family. In terms of assembly, heterotetramer of two alpha chains and two beta chains. Red blood cells.

Functionally, involved in oxygen transport from the lung to the various peripheral tissues. Hemopressin acts as an antagonist peptide of the cannabinoid receptor CNR1. Hemopressin-binding efficiently blocks cannabinoid receptor CNR1 and subsequent signaling. This chain is Hemoglobin subunit alpha (HBA), found in Tupaia glis (Common tree shrew).